A 213-amino-acid chain; its full sequence is MNLFRFTADVAHAIAIVVLLLKIWKSRSCEGISGRSQLLFALVFVTRYLDLFTNFFSFYNTAMKIFYLVASFGTVYLMWAKFKATYDRNNDSFRIEFLVIPSMILALLINHEFIFMEVMWTFSIYLEAVAIMPQLFMLSRTGNAETITAHYLFALGSYRFLYILNWVYRYYTESFFDPISVVAGIVQTVLYADFFYLYITRVIQSNRQFEMSA.

The Lumenal segment spans residues 1 to 2 (MN). A helical membrane pass occupies residues 3–21 (LFRFTADVAHAIAIVVLLL). The Cytoplasmic segment spans residues 22 to 35 (KIWKSRSCEGISGR). Residues 36 to 53 (SQLLFALVFVTRYLDLFT) form a helical membrane-spanning segment. The Lumenal portion of the chain corresponds to 54–61 (NFFSFYNT). Residues 62–80 (AMKIFYLVASFGTVYLMWA) form a helical membrane-spanning segment. At 81-96 (KFKATYDRNNDSFRIE) the chain is on the cytoplasmic side. A helical transmembrane segment spans residues 97 to 110 (FLVIPSMILALLIN). Residues 111–117 (HEFIFME) lie on the Lumenal side of the membrane. A helical membrane pass occupies residues 118 to 137 (VMWTFSIYLEAVAIMPQLFM). At 138 to 149 (LSRTGNAETITA) the chain is on the cytoplasmic side. The chain crosses the membrane as a helical span at residues 150–168 (HYLFALGSYRFLYILNWVY). Topologically, residues 169-178 (RYYTESFFDP) are lumenal. Residues 179-199 (ISVVAGIVQTVLYADFFYLYI) traverse the membrane as a helical segment. The Cytoplasmic segment spans residues 200–213 (TRVIQSNRQFEMSA).

This sequence belongs to the ERD2 family.

The protein localises to the endoplasmic reticulum membrane. In terms of biological role, required for the retention of luminal endoplasmic reticulum proteins. Determines the specificity of the luminal ER protein retention system. Also required for normal vesicular traffic through the Golgi. The polypeptide is ER lumen protein-retaining receptor erd-2.1 (Caenorhabditis elegans).